Here is a 694-residue protein sequence, read N- to C-terminus: N,N-dimethylglycine/sarcosine dehydrogenase (694 aa).

This sequence in the N-terminal section; belongs to the NADH:flavin oxidoreductase/NADH oxidase family. In terms of assembly, monomer. The purified enzyme exists in the form of a monomer, dimer or polymer under non-denaturing conditions, but only the monomeric protein exhibits enzyme activity. Requires FAD as cofactor. The cofactor is NAD(+). NADP(+) serves as cofactor.

Its subcellular location is the cytoplasm. It carries out the reaction oxidized 2[4Fe-4S]-[ferredoxin] + N,N-dimethylglycine + H2O = reduced 2[4Fe-4S]-[ferredoxin] + sarcosine + formaldehyde + 2 H(+). It catalyses the reaction oxidized 2[4Fe-4S]-[ferredoxin] + sarcosine + H2O = reduced 2[4Fe-4S]-[ferredoxin] + formaldehyde + glycine + 2 H(+). With respect to regulation, ca(2+) increases the activity by 12%, while the other metal ions tested have no or slightly inhibitory effects. The chelating agent EDTA inhibits the activity by 33%. Its function is as follows. Involved in degradation of glycine betaine. Catalyzes the demethylation of both N,N-dimethylglycine (DMG) and sarcosine, releasing formaldehyde and forming glycine as the final product. Does not show activity toward trimethylamine (TMA), histamine, glycine betaine (GB) or choline. The C-N bond in DMG is probably oxidized by removal of a hydride equivalent to form a labile imine intermediate, which is then spontaneously hydrolyzed in the presence of water, producing sarcosine and formaldehyde. The two protons subtracted from DMG are transferred to the non-covalently bound FAD, resulting in the reduced form of FAD, which is subsequently reoxidized by coupling with reduction of the enzyme-bound NAD(P)(+). Regeneration of NAD(P)(+) is achieved by electron transfer to the [4Fe-4S] cluster in the probable membrane-anchored ferredoxin csal_0991. The polypeptide is N,N-dimethylglycine/sarcosine dehydrogenase (Chromohalobacter salexigens (strain ATCC BAA-138 / DSM 3043 / CIP 106854 / NCIMB 13768 / 1H11)).